Reading from the N-terminus, the 371-residue chain is Probable beta-1,3-galactosyltransferase 12 (371 aa).

The tract at residues 1–36 (MPLFSHRFTTASSSSPASPSYYNKPSSKTHKPNSSS) is disordered. A compositionally biased stretch (low complexity) spans 11–36 (ASSSSPASPSYYNKPSSKTHKPNSSS). The helical; Signal-anchor for type II membrane protein transmembrane segment at 46 to 66 (VAIIFFSLVSVFIGVAGTIFA) threads the bilayer. The N-linked (GlcNAc...) asparagine glycan is linked to Asn-291.

Belongs to the glycosyltransferase 31 family. The cofactor is Mn(2+).

Its subcellular location is the golgi apparatus membrane. It functions in the pathway protein modification; protein glycosylation. In terms of biological role, beta-1,3-galactosyltransferase that transfers galactose from UDP-galactose to substrates with a terminal glycosyl residue. The sequence is that of Probable beta-1,3-galactosyltransferase 12 (B3GALT12) from Arabidopsis thaliana (Mouse-ear cress).